A 24-amino-acid chain; its full sequence is Brevinin-1CSa (24 aa).

A disulfide bond links Cys18 and Cys24.

As to expression, expressed by the skin glands.

It localises to the secreted. Its subcellular location is the target cell membrane. In terms of biological role, antibacterial peptide. Has activity against the Gram-positive bacterium S.aureus (MIC=2 uM) and the Gram-negative bacterium E.coli (MIC=32 uM). Has a strong hemolytic activity (LC(50)=5 uM). This chain is Brevinin-1CSa, found in Rana cascadae (Cascades frog).